Consider the following 157-residue polypeptide: Transcription elongation factor GreA (157 aa).

This sequence belongs to the GreA/GreB family.

Necessary for efficient RNA polymerase transcription elongation past template-encoded arresting sites. The arresting sites in DNA have the property of trapping a certain fraction of elongating RNA polymerases that pass through, resulting in locked ternary complexes. Cleavage of the nascent transcript by cleavage factors such as GreA or GreB allows the resumption of elongation from the new 3'terminus. GreA releases sequences of 2 to 3 nucleotides. This is Transcription elongation factor GreA from Mesorhizobium japonicum (strain LMG 29417 / CECT 9101 / MAFF 303099) (Mesorhizobium loti (strain MAFF 303099)).